Consider the following 382-residue polypeptide: RIB43A-like with coiled-coils protein 2 (382 aa).

A coiled-coil region spans residues 222-255 (NKSQAIESVERKKQEKKQEQEDNLAEITNLLRGD).

Belongs to the RIB43A family. As to quaternary structure, microtubule inner protein component of sperm flagellar doublet microtubules. In terms of tissue distribution, expressed in airway epithelial cells.

It is found in the cytoplasm. The protein localises to the cytoskeleton. The protein resides in the cilium axoneme. Its subcellular location is the flagellum axoneme. Microtubule inner protein (MIP) part of the dynein-decorated doublet microtubules (DMTs) in cilia axoneme, which is required for motile cilia beating. The sequence is that of RIB43A-like with coiled-coils protein 2 from Homo sapiens (Human).